An 842-amino-acid chain; its full sequence is MutS protein homolog him-14 (842 aa).

The interval 1-21 (MYSNKSFQRRQRQQVAESRSE) is disordered. 588–595 (GPNMAGKS) is a binding site for ATP.

The protein belongs to the DNA mismatch repair MutS family. In terms of assembly, heterooligomer of him-14 and msh-5.

The protein resides in the nucleus. Functionally, required during the pachytene stage of meiotic prophase for the formation of crossovers between homologous chromosomes. Together with msh-5 and zhp-3 plays a role in the activation of DNA damage-dependent apoptosis at the DNA damage checkpoint in pachytene cells. Not needed for pairing or synapsis. May promote crossing over by interfering with Holliday junction branch migration. Has no apparent role in DNA mismatch repair. In Caenorhabditis elegans, this protein is MutS protein homolog him-14.